The chain runs to 587 residues: Urease subunit alpha (587 aa).

One can recognise a Urease domain in the interval 134-572; that stretch reads GGIDTHVHFI…LPLAQRYLYT (439 aa). 3 residues coordinate Ni(2+): His139, His141, and Lys222. Lys222 bears the N6-carboxylysine mark. Residue His224 participates in substrate binding. The Ni(2+) site is built by His251 and His277. His325 functions as the Proton donor in the catalytic mechanism. Position 365 (Asp365) interacts with Ni(2+).

The protein belongs to the metallo-dependent hydrolases superfamily. Urease alpha subunit family. As to quaternary structure, heterotrimer of UreA (gamma), UreB (beta) and UreC (alpha) subunits. Three heterotrimers associate to form the active enzyme. It depends on Ni cation as a cofactor. In terms of processing, carboxylation allows a single lysine to coordinate two nickel ions.

It localises to the cytoplasm. It catalyses the reaction urea + 2 H2O + H(+) = hydrogencarbonate + 2 NH4(+). It participates in nitrogen metabolism; urea degradation; CO(2) and NH(3) from urea (urease route): step 1/1. The chain is Urease subunit alpha from Clostridium perfringens.